The primary structure comprises 109 residues: FK506-binding protein (109 aa).

The PPIase FKBP-type domain occupies 20–108 (GKEITVHYTG…IFEVELLKVY (89 aa)).

This sequence belongs to the FKBP-type PPIase family.

The enzyme catalyses [protein]-peptidylproline (omega=180) = [protein]-peptidylproline (omega=0). Inhibited by FK506. PPIases accelerate the folding of proteins. This chain is FK506-binding protein (fbp), found in Neisseria meningitidis serogroup A / serotype 4A (strain DSM 15465 / Z2491).